The primary structure comprises 197 residues: MKLREVKPEIRVLGIDDGYYGPEDDRALVVGVVMRGGQWIDGVMSTEVTVDGLDVTDRIAEMVNRSKHRPQLRVILTDGITFAGFNVLDIKKLHEETGLPVISVIKRRPDVASVVSALSNLDRTEERRKIVLRAGPVHSVKTRRDEPPVYFQCAGVEPDVARVVLKRTATRHRLPEPIRVAHFIATGVTKGESSSDA.

The protein belongs to the UPF0215 family.

The polypeptide is UPF0215 protein MK0057 (Methanopyrus kandleri (strain AV19 / DSM 6324 / JCM 9639 / NBRC 100938)).